A 227-amino-acid polypeptide reads, in one-letter code: ATP synthase F(0) complex subunit a (227 aa).

A run of 6 helical transmembrane segments spans residues 14–34, 69–89, 98–118, 139–159, 167–187, and 190–210; these read LLGH…FPSP, WALM…LGLL, QLSM…LTGL, IPAL…ALGV, AGHL…PILP, and SILT…VAMI.

This sequence belongs to the ATPase A chain family. In terms of assembly, component of the ATP synthase complex composed at least of ATP5F1A/subunit alpha, ATP5F1B/subunit beta, ATP5MC1/subunit c (homooctomer), MT-ATP6/subunit a, MT-ATP8/subunit 8, ATP5ME/subunit e, ATP5MF/subunit f, ATP5MG/subunit g, ATP5MK/subunit k, ATP5MJ/subunit j, ATP5F1C/subunit gamma, ATP5F1D/subunit delta, ATP5F1E/subunit epsilon, ATP5PF/subunit F6, ATP5PB/subunit b, ATP5PD/subunit d, ATP5PO/subunit OSCP. ATP synthase complex consists of a soluble F(1) head domain (subunits alpha(3) and beta(3)) - the catalytic core - and a membrane F(0) domain - the membrane proton channel (subunits c, a, 8, e, f, g, k and j). These two domains are linked by a central stalk (subunits gamma, delta, and epsilon) rotating inside the F1 region and a stationary peripheral stalk (subunits F6, b, d, and OSCP). Interacts with DNAJC30; interaction is direct.

Its subcellular location is the mitochondrion inner membrane. The catalysed reaction is H(+)(in) = H(+)(out). In terms of biological role, subunit a, of the mitochondrial membrane ATP synthase complex (F(1)F(0) ATP synthase or Complex V) that produces ATP from ADP in the presence of a proton gradient across the membrane which is generated by electron transport complexes of the respiratory chain. ATP synthase complex consist of a soluble F(1) head domain - the catalytic core - and a membrane F(1) domain - the membrane proton channel. These two domains are linked by a central stalk rotating inside the F(1) region and a stationary peripheral stalk. During catalysis, ATP synthesis in the catalytic domain of F(1) is coupled via a rotary mechanism of the central stalk subunits to proton translocation. With the subunit c (ATP5MC1), forms the proton-conducting channel in the F(0) domain, that contains two crucial half-channels (inlet and outlet) that facilitate proton movement from the mitochondrial intermembrane space (IMS) into the matrix. Protons are taken up via the inlet half-channel and released through the outlet half-channel, following a Grotthuss mechanism. This is ATP synthase F(0) complex subunit a from Anas platyrhynchos (Mallard).